A 144-amino-acid polypeptide reads, in one-letter code: Small ribosomal subunit protein eS12y (144 aa).

An N-acetylserine modification is found at Ser-2.

Belongs to the eukaryotic ribosomal protein eS12 family.

The chain is Small ribosomal subunit protein eS12y (RPS12C) from Arabidopsis thaliana (Mouse-ear cress).